The chain runs to 657 residues: uncharacterized protein (657 aa).

The first 17 residues, 1-17, serve as a signal peptide directing secretion; it reads MACVLACVAVLIGAASA.

This is an uncharacterized protein from Orgyia pseudotsugata (Douglas-fir tussock moth).